The chain runs to 196 residues: Imidazoleglycerol-phosphate dehydratase (196 aa).

The protein belongs to the imidazoleglycerol-phosphate dehydratase family.

It is found in the cytoplasm. The catalysed reaction is D-erythro-1-(imidazol-4-yl)glycerol 3-phosphate = 3-(imidazol-4-yl)-2-oxopropyl phosphate + H2O. The protein operates within amino-acid biosynthesis; L-histidine biosynthesis; L-histidine from 5-phospho-alpha-D-ribose 1-diphosphate: step 6/9. The polypeptide is Imidazoleglycerol-phosphate dehydratase (Desulfitobacterium hafniense (strain Y51)).